The following is a 346-amino-acid chain: Phosphate acyltransferase (346 aa).

The protein belongs to the PlsX family. In terms of assembly, homodimer. Probably interacts with PlsY.

Its subcellular location is the cytoplasm. It carries out the reaction a fatty acyl-[ACP] + phosphate = an acyl phosphate + holo-[ACP]. It functions in the pathway lipid metabolism; phospholipid metabolism. Its function is as follows. Catalyzes the reversible formation of acyl-phosphate (acyl-PO(4)) from acyl-[acyl-carrier-protein] (acyl-ACP). This enzyme utilizes acyl-ACP as fatty acyl donor, but not acyl-CoA. The protein is Phosphate acyltransferase of Deinococcus geothermalis (strain DSM 11300 / CIP 105573 / AG-3a).